Here is a 64-residue protein sequence, read N- to C-terminus: Large ribosomal subunit protein uL29 (64 aa).

Belongs to the universal ribosomal protein uL29 family.

The polypeptide is Large ribosomal subunit protein uL29 (Cupriavidus necator (strain ATCC 17699 / DSM 428 / KCTC 22496 / NCIMB 10442 / H16 / Stanier 337) (Ralstonia eutropha)).